The chain runs to 205 residues: Protein-L-isoaspartate O-methyltransferase (205 aa).

S56 is an active-site residue.

The protein belongs to the methyltransferase superfamily. L-isoaspartyl/D-aspartyl protein methyltransferase family.

It localises to the cytoplasm. The catalysed reaction is [protein]-L-isoaspartate + S-adenosyl-L-methionine = [protein]-L-isoaspartate alpha-methyl ester + S-adenosyl-L-homocysteine. Catalyzes the methyl esterification of L-isoaspartyl residues in peptides and proteins that result from spontaneous decomposition of normal L-aspartyl and L-asparaginyl residues. It plays a role in the repair and/or degradation of damaged proteins. The polypeptide is Protein-L-isoaspartate O-methyltransferase (Pyrobaculum arsenaticum (strain DSM 13514 / JCM 11321 / PZ6)).